We begin with the raw amino-acid sequence, 577 residues long: MNIQSILSDKIKQAMVIAGADQSCDALVRQSGKPQFGDYQANGIMAAAKKLGLNPREFAQKVLDNLQLSDIAEKLEIAGPGFINIFLNPTWLTTEISAALSHKNLGIQATNKQTVVIDYSSPNVAKEMHVGHLRSTIIGDAVARTLEFLGHNVIRANHVGDWGTQFGMLIAYLEKMQNEHASEMELQDLEAFYREAKKHYDEDEIFAEKARNYVVKLQSGDEYCRTMWKRLVDITMQQNQHNYNRLNVTLTEKDVMGESLYNPMLPSIVEDLKKQGLAVENDGALVVYLDEFKNKDGDPMGVIVQKKDGGFLYTTTDIAAAKYRYETLKANRALVFSDTRQSQHMQQAWLITRKAGYVPDSFSLEHKNFGMMLGKDGKPFKTRTGGTVKLADLLNEAIERATVLINEKNTNLSNDEKQAVIEAIGIGSVKYADLSKNRTTDYVFDWDNMLSFEGNTAPYMQYAYTRIRSIFNKTDINSTALLAAPLTIKDDKERTLAIKLLQFEEAVQTVGKEGTPHVLCAYLYELAGIFSSFYEHCPILNAENESIKLSRLKLALLTEKTLKQGLTLLGIKTVEKM.

A 'HIGH' region motif is present at residues P122–H132.

This sequence belongs to the class-I aminoacyl-tRNA synthetase family. In terms of assembly, monomer.

The protein resides in the cytoplasm. It carries out the reaction tRNA(Arg) + L-arginine + ATP = L-arginyl-tRNA(Arg) + AMP + diphosphate. The polypeptide is Arginine--tRNA ligase (Haemophilus influenzae (strain 86-028NP)).